Reading from the N-terminus, the 523-residue chain is 2-isopropylmalate synthase (523 aa).

The Pyruvate carboxyltransferase domain maps to 5–267; the sequence is VIIFDTTLRD…HTAINHQEIW (263 aa). Residues D14, H202, H204, and N238 each contribute to the Mn(2+) site. Residues 392 to 523 form a regulatory domain region; the sequence is RLDYFSVQSG…QHNENNKETV (132 aa).

Belongs to the alpha-IPM synthase/homocitrate synthase family. LeuA type 1 subfamily. As to quaternary structure, homodimer. It depends on Mn(2+) as a cofactor.

Its subcellular location is the cytoplasm. It carries out the reaction 3-methyl-2-oxobutanoate + acetyl-CoA + H2O = (2S)-2-isopropylmalate + CoA + H(+). It functions in the pathway amino-acid biosynthesis; L-leucine biosynthesis; L-leucine from 3-methyl-2-oxobutanoate: step 1/4. Its function is as follows. Catalyzes the condensation of the acetyl group of acetyl-CoA with 3-methyl-2-oxobutanoate (2-ketoisovalerate) to form 3-carboxy-3-hydroxy-4-methylpentanoate (2-isopropylmalate). This Escherichia coli O157:H7 protein is 2-isopropylmalate synthase.